Reading from the N-terminus, the 160-residue chain is Small ribosomal subunit protein uS17m (160 aa).

This sequence belongs to the universal ribosomal protein uS17 family. Component of the mitochondrial ribosome small subunit (28S) which comprises a 12S rRNA and about 30 distinct proteins.

Its subcellular location is the mitochondrion. This Caenorhabditis elegans protein is Small ribosomal subunit protein uS17m (mrps-17).